The following is a 319-amino-acid chain: MRLLPRLLLLFLLAFPAAVLLRGGPGGSLAVAQDLTEDEETVEDPIIEDEDDEAEVEEDEPTDLAEEKEEEEDVSSEPEASPSADTTILFVKGEDFPANNIVKFLVGFTNKGTEDFIVESLDASFRYPQDYQFYIQNFTALPLNTIVPPQRQATFEYSFIPAEPMGGRPFGLVINLNYKDLNGNVFQDAVFNQTVTVIEREDGLDGETIFMYMFLAGLGLLVVVGLHQLLESRKRKRPIQKVEMGTSSQNDVDMSWIPQETLNQISAGRERHTEVTLQLHRPVVSDASYACFSCFRKLPRPATLAAWTSSLRQLAVCGI.

The first 21 residues, 1 to 21, serve as a signal peptide directing secretion; the sequence is MRLLPRLLLLFLLAFPAAVLL. Residues 22-208 are Lumenal-facing; that stretch reads RGGPGGSLAV…EREDGLDGET (187 aa). The span at 35-76 shows a compositional bias: acidic residues; that stretch reads LTEDEETVEDPIIEDEDDEAEVEEDEPTDLAEEKEEEEDVSS. The segment at 35–84 is disordered; sequence LTEDEETVEDPIIEDEDDEAEVEEDEPTDLAEEKEEEEDVSSEPEASPSA. N-linked (GlcNAc...) asparagine glycans are attached at residues Asn137 and Asn192. The helical transmembrane segment at 209–229 threads the bilayer; it reads IFMYMFLAGLGLLVVVGLHQL. Topologically, residues 230 to 319 are cytoplasmic; it reads LESRKRKRPI…SLRQLAVCGI (90 aa). Ser248 carries the post-translational modification Phosphoserine. The residue at position 261 (Thr261) is a Phosphothreonine.

Belongs to the TRAP-alpha family. As to quaternary structure, heterotetramer of TRAP-alpha, TRAP-beta, TRAP-delta and TRAP-gamma. Interacts with palmitoylated calnexin (CALX), the interaction is required for efficient folding of glycosylated proteins.

Its subcellular location is the endoplasmic reticulum membrane. Functionally, TRAP proteins are part of a complex whose function is to bind calcium to the ER membrane and thereby regulate the retention of ER resident proteins. May be involved in the recycling of the translocation apparatus after completion of the translocation process or may function as a membrane-bound chaperone facilitating folding of translocated proteins. The protein is Translocon-associated protein subunit alpha (Ssr1) of Rattus norvegicus (Rat).